A 133-amino-acid chain; its full sequence is Small ribosomal subunit protein uS11 (133 aa).

The protein belongs to the universal ribosomal protein uS11 family. Part of the 30S ribosomal subunit. Interacts with proteins S7 and S18. Binds to IF-3.

Functionally, located on the platform of the 30S subunit, it bridges several disparate RNA helices of the 16S rRNA. Forms part of the Shine-Dalgarno cleft in the 70S ribosome. The polypeptide is Small ribosomal subunit protein uS11 (Methylibium petroleiphilum (strain ATCC BAA-1232 / LMG 22953 / PM1)).